The sequence spans 96 residues: Glutamyl-tRNA(Gln) amidotransferase subunit C (96 aa).

The protein belongs to the GatC family. In terms of assembly, heterotrimer of A, B and C subunits.

The catalysed reaction is L-glutamyl-tRNA(Gln) + L-glutamine + ATP + H2O = L-glutaminyl-tRNA(Gln) + L-glutamate + ADP + phosphate + H(+). It catalyses the reaction L-aspartyl-tRNA(Asn) + L-glutamine + ATP + H2O = L-asparaginyl-tRNA(Asn) + L-glutamate + ADP + phosphate + 2 H(+). Its function is as follows. Allows the formation of correctly charged Asn-tRNA(Asn) or Gln-tRNA(Gln) through the transamidation of misacylated Asp-tRNA(Asn) or Glu-tRNA(Gln) in organisms which lack either or both of asparaginyl-tRNA or glutaminyl-tRNA synthetases. The reaction takes place in the presence of glutamine and ATP through an activated phospho-Asp-tRNA(Asn) or phospho-Glu-tRNA(Gln). The protein is Glutamyl-tRNA(Gln) amidotransferase subunit C of Halalkalibacterium halodurans (strain ATCC BAA-125 / DSM 18197 / FERM 7344 / JCM 9153 / C-125) (Bacillus halodurans).